The primary structure comprises 188 residues: Insulin-like peptide INSL6 (188 aa).

An N-terminal signal peptide occupies residues 1 to 22 (MKQLCCSCLLWLGLLLAPFSQE). Intrachain disulfides connect Cys33–Cys169, Cys45–Cys182, and Cys168–Cys173. Residues 53–158 (FSMEEQSPMT…SGLFWGNHPQ (106 aa)) constitute a propeptide, connecting peptide.

It belongs to the insulin family. Testis and prostate specific.

It localises to the secreted. In terms of biological role, may have a role in sperm development and fertilization. The polypeptide is Insulin-like peptide INSL6 (Insl6) (Rattus norvegicus (Rat)).